The following is a 463-amino-acid chain: Quinolone resistance protein NorB (463 aa).

A run of 14 helical transmembrane segments spans residues 17–37 (IGIV…VNVV), 53–73 (IAVS…GGLA), 86–106 (IILN…LLLI), 107–127 (IGRL…LSII), 142–162 (YWSI…GAVA), 165–185 (LGWR…LFLI), 201–221 (FDIK…ILIT), 230–250 (SLLF…FIVL), 273–293 (TASN…NTFV), 299–319 (YSSL…LIMI), 334–354 (PMLI…LTFL), 357–377 (ILYV…LGIY), 403–423 (MASA…YAIV), and 435–455 (IALW…LLLV).

The protein belongs to the major facilitator superfamily. TCR/Tet family.

Its subcellular location is the cell membrane. Multidrug efflux pump that acts independently of NorA and is one of the factors that confers resistance against diverse quinolones and chemical compounds. Can facilitate bacterial survival in vivo when overexpressed in an abscess and may contribute to the relative resistance of staphylococcal abscesses to antimicrobial therapy. In Staphylococcus aureus (strain MW2), this protein is Quinolone resistance protein NorB (norB).